Consider the following 298-residue polypeptide: 4-nitrophenylphosphatase (298 aa).

Homodimer. In terms of processing, the N-terminus is blocked.

The catalysed reaction is 4-nitrophenyl phosphate + H2O = 4-nitrophenol + phosphate + H(+). Activity enhanced by Mg(2+) ion but inhibited by Zn(2+) ion. The sequence is that of 4-nitrophenylphosphatase (pho2) from Schizosaccharomyces pombe (strain 972 / ATCC 24843) (Fission yeast).